The primary structure comprises 168 residues: Cell division inhibitor SulA (168 aa).

The interval Ala106–Tyr112 is ftsZ binding. A lon protease binding region spans residues Lys161–His168.

The protein belongs to the SulA family. In terms of assembly, interacts with FtsZ. In terms of processing, is rapidly cleaved and degraded by the Lon protease once DNA damage is repaired.

Component of the SOS system and an inhibitor of cell division. Accumulation of SulA causes rapid cessation of cell division and the appearance of long, non-septate filaments. In the presence of GTP, binds a polymerization-competent form of FtsZ in a 1:1 ratio, thus inhibiting FtsZ polymerization and therefore preventing it from participating in the assembly of the Z ring. This mechanism prevents the premature segregation of damaged DNA to daughter cells during cell division. The protein is Cell division inhibitor SulA of Yersinia pseudotuberculosis serotype O:1b (strain IP 31758).